The sequence spans 352 residues: Small ribosomal subunit biogenesis GTPase RsgA 1 (352 aa).

The disordered stretch occupies residues 1 to 24; the sequence is MAKKKKLTQGQVRRVRDNQQKRLK. The CP-type G domain occupies 104-272; the sequence is TSVLTRPDYY…LIDSPGVREF (169 aa). GTP-binding positions include 160–163 and 214–222; these read NKID and GQSGVGKSS. Zn(2+)-binding residues include Cys-296, Cys-301, His-303, and Cys-309.

This sequence belongs to the TRAFAC class YlqF/YawG GTPase family. RsgA subfamily. Monomer. Associates with 30S ribosomal subunit, binds 16S rRNA. The cofactor is Zn(2+).

Its subcellular location is the cytoplasm. Functionally, one of several proteins that assist in the late maturation steps of the functional core of the 30S ribosomal subunit. Helps release RbfA from mature subunits. May play a role in the assembly of ribosomal proteins into the subunit. Circularly permuted GTPase that catalyzes slow GTP hydrolysis, GTPase activity is stimulated by the 30S ribosomal subunit. The chain is Small ribosomal subunit biogenesis GTPase RsgA 1 from Vibrio vulnificus (strain CMCP6).